We begin with the raw amino-acid sequence, 62 residues long: U8-theraphotoxin-Cg1a 1 (62 aa).

An N-terminal signal peptide occupies residues 1–21; that stretch reads MKTLVLFIIFGLAALFLLSSA. A propeptide spanning residues 22 to 29 is cleaved from the precursor; that stretch reads NELEETER. 3 disulfide bridges follow: C31–C46, C38–C51, and C45–C58.

Belongs to the neurotoxin 10 (Hwtx-1) family. 30 (Jztx-14) subfamily. As to expression, expressed by the venom gland.

The protein localises to the secreted. Its function is as follows. Probable ion channel inhibitor. The polypeptide is U8-theraphotoxin-Cg1a 1 (Chilobrachys guangxiensis (Chinese earth tiger tarantula)).